A 594-amino-acid chain; its full sequence is Solute carrier family 13 member 1 (594 aa).

The next 5 membrane-spanning stretches (helical) occupy residues 13–33, 40–60, 77–97, 113–133, and 134–154; these read FLLV…IRTK, ILFV…ITAL, VASA…CLAT, VMMV…STAF, and LSMW…VEAV. A glycan (N-linked (GlcNAc...) asparagine) is linked at Asn-174. Residues 192–220 show a composition bias toward basic and acidic residues; that stretch reads TNEKKEKTKPAPGSSHDKGKVSRKMETEK. The disordered stretch occupies residues 192–226; the sequence is TNEKKEKTKPAPGSSHDKGKVSRKMETEKNAVTGA. 8 consecutive transmembrane segments (helical) span residues 239-259, 283-303, 347-367, 380-400, 461-481, 487-507, 511-531, and 552-572; these read LMCL…ITGT, SWFL…WIWL, IVTL…DPGF, GYVT…LIPA, LSPL…LIVT, ASNP…AEAI, PLQI…LPVA, and AGLG…FTWI. N-linked (GlcNAc...) asparagine glycosylation is present at Asn-590.

This sequence belongs to the SLC13A/DASS transporter (TC 2.A.47) family. NADC subfamily. In terms of tissue distribution, highly expressed in kidney and ileum, detected at lower levels in duodenum/jejunum and colon, and at very low levels in cecum, testis, adrenal and adipose tissues. Expressed in the kidney.

Its subcellular location is the apical cell membrane. It catalyses the reaction sulfate(out) + 3 Na(+)(out) = sulfate(in) + 3 Na(+)(in). It carries out the reaction selenate(out) + 3 Na(+)(out) = selenate(in) + 3 Na(+)(in). The enzyme catalyses thiosulfate(out) + 3 Na(+)(out) = thiosulfate(in) + 3 Na(+)(in). Functionally, sodium:sulfate symporter that mediates sulfate reabsorption in the kidney and small intestine. Can also mediate the transport of selenate and thiosulfate. This is Solute carrier family 13 member 1 (Slc13a1) from Mus musculus (Mouse).